Here is a 68-residue protein sequence, read N- to C-terminus: Large ribosomal subunit protein uL29 (68 aa).

Belongs to the universal ribosomal protein uL29 family.

This Chlorobaculum parvum (strain DSM 263 / NCIMB 8327) (Chlorobium vibrioforme subsp. thiosulfatophilum) protein is Large ribosomal subunit protein uL29.